The primary structure comprises 395 residues: S-adenosylmethionine synthase (395 aa).

Histidine 16 lines the ATP pocket. Residue aspartate 18 participates in Mg(2+) binding. Glutamate 44 is a K(+) binding site. L-methionine is bound by residues glutamate 57 and glutamine 100. The segment at 100–110 (QSPDIAQGVDR) is flexible loop. ATP contacts are provided by residues 167 to 169 (DAK), 233 to 234 (RF), aspartate 242, 248 to 249 (RK), alanine 265, and lysine 269. Residue aspartate 242 participates in L-methionine binding. Position 273 (lysine 273) interacts with L-methionine.

This sequence belongs to the AdoMet synthase family. Homotetramer; dimer of dimers. Mg(2+) serves as cofactor. K(+) is required as a cofactor.

The protein localises to the cytoplasm. The enzyme catalyses L-methionine + ATP + H2O = S-adenosyl-L-methionine + phosphate + diphosphate. The protein operates within amino-acid biosynthesis; S-adenosyl-L-methionine biosynthesis; S-adenosyl-L-methionine from L-methionine: step 1/1. Its function is as follows. Catalyzes the formation of S-adenosylmethionine (AdoMet) from methionine and ATP. The overall synthetic reaction is composed of two sequential steps, AdoMet formation and the subsequent tripolyphosphate hydrolysis which occurs prior to release of AdoMet from the enzyme. This is S-adenosylmethionine synthase from Burkholderia mallei (strain NCTC 10247).